The primary structure comprises 459 residues: Bifunctional protein GlmU (459 aa).

The interval 1-229 is pyrophosphorylase; the sequence is MLTQEIIIVI…YEEILGINNK (229 aa). Residues 11-14, Lys-25, Gln-76, 81-82, 103-105, Gly-140, Glu-154, and Asn-227 contribute to the UDP-N-acetyl-alpha-D-glucosamine site; these read LAAG, GT, and YGD. Residue Asp-105 coordinates Mg(2+). Position 227 (Asn-227) interacts with Mg(2+). Residues 230–250 form a linker region; sequence LQLSNLEKIFQKKQINKLLIN. Residues 251 to 459 form an N-acetyltransferase region; that stretch reads GVTIKDPSHF…MRSKKIIKKN (209 aa). Residues Arg-333 and Lys-351 each coordinate UDP-N-acetyl-alpha-D-glucosamine. The active-site Proton acceptor is the His-363. UDP-N-acetyl-alpha-D-glucosamine contacts are provided by Tyr-366 and Asn-377. Acetyl-CoA is bound by residues Ala-380, 386 to 387, Ser-405, and Ala-423; that span reads NY.

The protein in the N-terminal section; belongs to the N-acetylglucosamine-1-phosphate uridyltransferase family. This sequence in the C-terminal section; belongs to the transferase hexapeptide repeat family. In terms of assembly, homotrimer. Requires Mg(2+) as cofactor.

The protein resides in the cytoplasm. The enzyme catalyses alpha-D-glucosamine 1-phosphate + acetyl-CoA = N-acetyl-alpha-D-glucosamine 1-phosphate + CoA + H(+). The catalysed reaction is N-acetyl-alpha-D-glucosamine 1-phosphate + UTP + H(+) = UDP-N-acetyl-alpha-D-glucosamine + diphosphate. The protein operates within nucleotide-sugar biosynthesis; UDP-N-acetyl-alpha-D-glucosamine biosynthesis; N-acetyl-alpha-D-glucosamine 1-phosphate from alpha-D-glucosamine 6-phosphate (route II): step 2/2. Its pathway is nucleotide-sugar biosynthesis; UDP-N-acetyl-alpha-D-glucosamine biosynthesis; UDP-N-acetyl-alpha-D-glucosamine from N-acetyl-alpha-D-glucosamine 1-phosphate: step 1/1. It participates in bacterial outer membrane biogenesis; LPS lipid A biosynthesis. Catalyzes the last two sequential reactions in the de novo biosynthetic pathway for UDP-N-acetylglucosamine (UDP-GlcNAc). The C-terminal domain catalyzes the transfer of acetyl group from acetyl coenzyme A to glucosamine-1-phosphate (GlcN-1-P) to produce N-acetylglucosamine-1-phosphate (GlcNAc-1-P), which is converted into UDP-GlcNAc by the transfer of uridine 5-monophosphate (from uridine 5-triphosphate), a reaction catalyzed by the N-terminal domain. The chain is Bifunctional protein GlmU from Buchnera aphidicola subsp. Acyrthosiphon pisum (strain 5A).